We begin with the raw amino-acid sequence, 384 residues long: MGMQMKNFKKMMTLMALCLSVAITTSGYATTLPDIPEPLKNGTGAIDNNGVIYVGLGTAGTSWYKIDLKKQHKDWERIKSFPGGAREQSVSVFLNDELYVFGGVGKKNSESPLQVYSDVYKYSPVKNTWQKVDTISPVGLTGHTGVKLNETMVLITGGVNEHIFDKYFIDIEAADESEKNKVIYNYFNKPAKDYFFNKIVFIYNAKENTWKNAGELPGAGTAGSSSVMENNFLMLINGELKPGLRTDVIYRAMWDNDKLTWLKNSQLPPSPGEQQQEGLAGAFSGYSHGVLLVGGGANFPGAKQNYTNGKFYSHEGINKKWRDEVYGLVNGHWQYMGKMKQPLGYGVSVSYGDEVFLIGGENAKGKPVSSVTSFTMRDGNLLIK.

Positions 1-29 (MGMQMKNFKKMMTLMALCLSVAITTSGYA) are cleaved as a signal peptide. 7 Kelch repeats span residues 51 to 95 (VIYV…VFLN), 97 to 149 (ELYV…VKLN), 151 to 184 (TMVL…KVIY), 185 to 230 (NYFN…VMEN), 233 to 282 (LMLI…LAGA), 304 to 353 (QNYT…SYGD), and 355 to 384 (VFLI…LLIK). The Proton acceptor role is filled by Glu239.

It belongs to the NanM family. In terms of assembly, homodimer.

It localises to the periplasm. The catalysed reaction is N-acetyl-alpha-neuraminate = N-acetyl-beta-neuraminate. Functionally, converts alpha-N-acetylneuranimic acid (Neu5Ac) to the beta-anomer, accelerating the equilibrium between the alpha- and beta-anomers. Probably facilitates sialidase-negative bacteria to compete successfully for limited amounts of extracellular Neu5Ac, which is likely taken up in the beta-anomer. In addition, the rapid removal of sialic acid from solution might be advantageous to the bacterium to damp down host responses. This Salmonella enteritidis PT4 (strain P125109) protein is N-acetylneuraminate epimerase.